A 361-amino-acid polypeptide reads, in one-letter code: 3-dehydroquinate synthase (361 aa).

NAD(+)-binding positions include 72 to 77 (SGEKEK), 130 to 131 (TT), lysine 142, and lysine 151. Zn(2+)-binding residues include glutamate 184, histidine 247, and histidine 264.

It belongs to the sugar phosphate cyclases superfamily. Dehydroquinate synthase family. The cofactor is NAD(+). Co(2+) serves as cofactor. It depends on Zn(2+) as a cofactor.

It localises to the cytoplasm. The catalysed reaction is 7-phospho-2-dehydro-3-deoxy-D-arabino-heptonate = 3-dehydroquinate + phosphate. Its pathway is metabolic intermediate biosynthesis; chorismate biosynthesis; chorismate from D-erythrose 4-phosphate and phosphoenolpyruvate: step 2/7. Functionally, catalyzes the conversion of 3-deoxy-D-arabino-heptulosonate 7-phosphate (DAHP) to dehydroquinate (DHQ). The sequence is that of 3-dehydroquinate synthase from Bacillus cereus (strain ATCC 14579 / DSM 31 / CCUG 7414 / JCM 2152 / NBRC 15305 / NCIMB 9373 / NCTC 2599 / NRRL B-3711).